The chain runs to 34 residues: Protamine-Z1/Z2 (34 aa).

Residues 1–34 (PRRRRRSSRPVRRRRRYRRSTAARRRRRVVRRRR) form a disordered region.

Testis.

The protein localises to the nucleus. It is found in the chromosome. Functionally, protamines substitute for histones in the chromatin of sperm during the haploid phase of spermatogenesis. They compact sperm DNA into a highly condensed, stable and inactive complex. The sequence is that of Protamine-Z1/Z2 from Sarda orientalis (Striped bonito).